The following is a 193-amino-acid chain: Small ribosomal subunit protein uS7 (193 aa).

It belongs to the universal ribosomal protein uS7 family. Part of the 30S ribosomal subunit.

Its function is as follows. One of the primary rRNA binding proteins, it binds directly to 16S rRNA where it nucleates assembly of the head domain of the 30S subunit. Is located at the subunit interface close to the decoding center. This Saccharolobus solfataricus (strain ATCC 35092 / DSM 1617 / JCM 11322 / P2) (Sulfolobus solfataricus) protein is Small ribosomal subunit protein uS7.